The sequence spans 251 residues: Probable ATP-dependent transporter ycf16 (251 aa).

Positions 8–250 (LEIKNLKACI…ELESKGYEWL (243 aa)) constitute an ABC transporter domain. ATP is bound at residue 40 to 47 (GPNGSGKS).

This sequence belongs to the ABC transporter superfamily. Ycf16 family.

The protein localises to the plastid. It localises to the chloroplast. The protein is Probable ATP-dependent transporter ycf16 (ycf16) of Trieres chinensis (Marine centric diatom).